Consider the following 241-residue polypeptide: tRNA pseudouridine synthase A (241 aa).

The active-site Nucleophile is aspartate 52. Tyrosine 111 lines the substrate pocket.

It belongs to the tRNA pseudouridine synthase TruA family. Homodimer.

The catalysed reaction is uridine(38/39/40) in tRNA = pseudouridine(38/39/40) in tRNA. Formation of pseudouridine at positions 38, 39 and 40 in the anticodon stem and loop of transfer RNAs. This Ureaplasma parvum serovar 3 (strain ATCC 27815 / 27 / NCTC 11736) protein is tRNA pseudouridine synthase A.